The chain runs to 157 residues: Transcriptional repressor NrdR (157 aa).

The segment at 3-34 (CPFCNAEDTKVIDSRLVEEGTQVRRRRECLKC) is a zinc-finger region. Residues 49–139 (PRIIKRDGRR…VYRSFQDINA (91 aa)) enclose the ATP-cone domain.

This sequence belongs to the NrdR family. Zn(2+) is required as a cofactor.

Its function is as follows. Negatively regulates transcription of bacterial ribonucleotide reductase nrd genes and operons by binding to NrdR-boxes. This chain is Transcriptional repressor NrdR, found in Coxiella burnetii (strain CbuK_Q154) (Coxiella burnetii (strain Q154)).